The primary structure comprises 232 residues: tRNA (guanine-N(1)-)-methyltransferase (232 aa).

Residues G111 and 131 to 136 contribute to the S-adenosyl-L-methionine site; that span reads IGDYIL.

Belongs to the RNA methyltransferase TrmD family. As to quaternary structure, homodimer.

It is found in the cytoplasm. The catalysed reaction is guanosine(37) in tRNA + S-adenosyl-L-methionine = N(1)-methylguanosine(37) in tRNA + S-adenosyl-L-homocysteine + H(+). In terms of biological role, specifically methylates guanosine-37 in various tRNAs. The protein is tRNA (guanine-N(1)-)-methyltransferase of Bartonella henselae (strain ATCC 49882 / DSM 28221 / CCUG 30454 / Houston 1) (Rochalimaea henselae).